Reading from the N-terminus, the 83-residue chain is Cytochrome c oxidase subunit 7A2, mitochondrial (83 aa).

A mitochondrion-targeting transit peptide spans 1-23; the sequence is MLRNLLALRQIAQRTISTTSRRH. At 24-48 the chain is on the mitochondrial matrix side; sequence FENKVPEKQKLFQEDNGMPVHLKGG. An N6-acetyllysine modification is found at Lys33. A helical membrane pass occupies residues 49–77; the sequence is ASDALLYRATMALTLGGTAYAIYLLAMAA. Residues 78 to 83 are Mitochondrial intermembrane-facing; the sequence is FPKKQN.

Belongs to the cytochrome c oxidase VIIa family. Component of the cytochrome c oxidase (complex IV, CIV), a multisubunit enzyme composed of 14 subunits. The complex is composed of a catalytic core of 3 subunits MT-CO1, MT-CO2 and MT-CO3, encoded in the mitochondrial DNA, and 11 supernumerary subunits COX4I, COX5A, COX5B, COX6A, COX6B, COX6C, COX7A, COX7B, COX7C, COX8 and NDUFA4, which are encoded in the nuclear genome. The complex exists as a monomer or a dimer and forms supercomplexes (SCs) in the inner mitochondrial membrane with NADH-ubiquinone oxidoreductase (complex I, CI) and ubiquinol-cytochrome c oxidoreductase (cytochrome b-c1 complex, complex III, CIII), resulting in different assemblies (supercomplex SCI(1)III(2)IV(1) and megacomplex MCI(2)III(2)IV(2)). Interacts with PET100.

It localises to the mitochondrion inner membrane. The protein operates within energy metabolism; oxidative phosphorylation. Component of the cytochrome c oxidase, the last enzyme in the mitochondrial electron transport chain which drives oxidative phosphorylation. The respiratory chain contains 3 multisubunit complexes succinate dehydrogenase (complex II, CII), ubiquinol-cytochrome c oxidoreductase (cytochrome b-c1 complex, complex III, CIII) and cytochrome c oxidase (complex IV, CIV), that cooperate to transfer electrons derived from NADH and succinate to molecular oxygen, creating an electrochemical gradient over the inner membrane that drives transmembrane transport and the ATP synthase. Cytochrome c oxidase is the component of the respiratory chain that catalyzes the reduction of oxygen to water. Electrons originating from reduced cytochrome c in the intermembrane space (IMS) are transferred via the dinuclear copper A center (CU(A)) of subunit 2 and heme A of subunit 1 to the active site in subunit 1, a binuclear center (BNC) formed by heme A3 and copper B (CU(B)). The BNC reduces molecular oxygen to 2 water molecules using 4 electrons from cytochrome c in the IMS and 4 protons from the mitochondrial matrix. The chain is Cytochrome c oxidase subunit 7A2, mitochondrial (Cox7a2) from Mus musculus (Mouse).